The following is a 216-amino-acid chain: Nucleolar protein 12 (216 aa).

Residues 33–97 are a coiled coil; the sequence is GFHKRKVERK…LVTAKTESVQ (65 aa). Residues 120–216 form a disordered region; it reads LLGLPLPEQG…MTGKARHNGE (97 aa). A compositionally biased stretch (acidic residues) spans 129-140; the sequence is GDQDGSQEEEVS. Composition is skewed to basic residues over residues 171–183 and 200–216; these read AHSR…KHPR and KTQR…HNGE.

Belongs to the RRP17 family. As to quaternary structure, interacts with KIAA1191.

It is found in the nucleus. The protein resides in the nucleolus. Its subcellular location is the cytoplasm. Functionally, multifunctional RNA binding protein that plays a role in RNA metabolism and DNA maintenance. Participates in the resolution of DNA stress and the maintenance of genome integrity by localizing to sites of DNA insults. Also plays a role in proper nucleolar organization by limiting nucleolar size and regulating nucleolar number. Mechanistically, regulates the nucleolar levels of fibrillarin and nucleolin, two key players in pre-rRNA processing and ribosome assembly. This is Nucleolar protein 12 (Nol12) from Rattus norvegicus (Rat).